The sequence spans 141 residues: Nucleoside diphosphate kinase (141 aa).

Residues Lys-11, Phe-59, Arg-87, Thr-93, Arg-104, and Asn-114 each contribute to the ATP site. The active-site Pros-phosphohistidine intermediate is the His-117.

Belongs to the NDK family. In terms of assembly, homotetramer. Requires Mg(2+) as cofactor.

Its subcellular location is the cytoplasm. It carries out the reaction a 2'-deoxyribonucleoside 5'-diphosphate + ATP = a 2'-deoxyribonucleoside 5'-triphosphate + ADP. The enzyme catalyses a ribonucleoside 5'-diphosphate + ATP = a ribonucleoside 5'-triphosphate + ADP. Major role in the synthesis of nucleoside triphosphates other than ATP. The ATP gamma phosphate is transferred to the NDP beta phosphate via a ping-pong mechanism, using a phosphorylated active-site intermediate. In Ralstonia pickettii (strain 12J), this protein is Nucleoside diphosphate kinase.